The chain runs to 299 residues: Very long chain fatty acid elongase 5 (299 aa).

Residue methionine 1 is modified to N-acetylmethionine. 7 helical membrane-spanning segments follow: residues 26 to 46 (WFLL…LLIV), 64 to 84 (ILQL…YELV), 112 to 132 (VLWW…FFIL), 139 to 158 (ITVL…WFVM), 168 to 187 (FGAT…YGLS), 205 to 225 (GQLV…FWPC), and 227 to 247 (FPLG…ALFT). The disordered stretch occupies residues 274–299 (VAAVNGHTNSFPSLENSVKPRKQRKD). Polar residues predominate over residues 279 to 289 (GHTNSFPSLEN).

This sequence belongs to the ELO family. ELOVL5 subfamily. Interacts with TECR.

Its subcellular location is the endoplasmic reticulum membrane. The protein resides in the cell projection. It is found in the dendrite. The catalysed reaction is a very-long-chain acyl-CoA + malonyl-CoA + H(+) = a very-long-chain 3-oxoacyl-CoA + CO2 + CoA. It carries out the reaction (6Z,9Z,12Z)-octadecatrienoyl-CoA + malonyl-CoA + H(+) = (8Z,11Z,14Z)-3-oxoeicosatrienoyl-CoA + CO2 + CoA. It catalyses the reaction (9Z,12Z,15Z)-octadecatrienoyl-CoA + malonyl-CoA + H(+) = (11Z,14Z,17Z)-3-oxoeicosatrienoyl-CoA + CO2 + CoA. The enzyme catalyses (9Z)-hexadecenoyl-CoA + malonyl-CoA + H(+) = 3-oxo-(11Z)-octadecenoyl-CoA + CO2 + CoA. The catalysed reaction is (9Z)-octadecenoyl-CoA + malonyl-CoA + H(+) = 3-oxo-(11Z)-eicosenoyl-CoA + CO2 + CoA. It carries out the reaction (11Z)-octadecenoyl-CoA + malonyl-CoA + H(+) = 3-oxo-(13Z)-eicosenoyl-CoA + CO2 + CoA. It catalyses the reaction (9Z,12Z)-octadecadienoyl-CoA + malonyl-CoA + H(+) = (11Z,14Z)-3-oxoicosa-11,14-dienoyl-CoA + CO2 + CoA. The enzyme catalyses (6Z,9Z,12Z,15Z)-octadecatetraenoyl-CoA + malonyl-CoA + H(+) = (8Z,11Z,14Z,17Z)-3-oxoicosatetraenoyl-CoA + CO2 + CoA. The catalysed reaction is (5Z,8Z,11Z,14Z)-eicosatetraenoyl-CoA + malonyl-CoA + H(+) = (7Z,10Z,13Z,16Z)-3-oxodocosatetraenoyl-CoA + CO2 + CoA. It carries out the reaction (5Z,8Z,11Z,14Z,17Z)-eicosapentaenoyl-CoA + malonyl-CoA + H(+) = 3-oxo-(7Z,10Z,13Z,16Z,19Z)-docosapentaenoyl-CoA + CO2 + CoA. Its pathway is lipid metabolism; polyunsaturated fatty acid biosynthesis. Functionally, catalyzes the first and rate-limiting reaction of the four reactions that constitute the long-chain fatty acids elongation cycle. This endoplasmic reticulum-bound enzymatic process allows the addition of 2 carbons to the chain of long- and very long-chain fatty acids (VLCFAs) per cycle. Condensing enzyme that acts specifically toward polyunsaturated acyl-CoA with the higher activity toward C18:3(n-6) acyl-CoA. May participate in the production of monounsaturated and of polyunsaturated VLCFAs of different chain lengths that are involved in multiple biological processes as precursors of membrane lipids and lipid mediators. In conditions where the essential linoleic and alpha linoleic fatty acids are lacking it is also involved in the synthesis of Mead acid from oleic acid. The chain is Very long chain fatty acid elongase 5 from Mus musculus (Mouse).